The sequence spans 379 residues: Cytochrome b (379 aa).

Transmembrane regions (helical) follow at residues 33-53 (FGSL…FLAM), 77-98 (WTIR…FIHV), 113-133 (WNIG…GYVL), and 178-198 (FFAL…IHLL). Heme b contacts are provided by histidine 83 and histidine 97. 2 residues coordinate heme b: histidine 182 and histidine 196. Residue histidine 201 coordinates a ubiquinone. A run of 4 helical transmembrane segments spans residues 226-246 (TKDF…TLFY), 288-308 (LGGV…PFLQ), 320-340 (LSQF…WIGG), and 347-367 (FISI…FIMP).

This sequence belongs to the cytochrome b family. As to quaternary structure, the cytochrome bc1 complex contains 11 subunits: 3 respiratory subunits (MT-CYB, CYC1 and UQCRFS1), 2 core proteins (UQCRC1 and UQCRC2) and 6 low-molecular weight proteins (UQCRH/QCR6, UQCRB/QCR7, UQCRQ/QCR8, UQCR10/QCR9, UQCR11/QCR10 and a cleavage product of UQCRFS1). This cytochrome bc1 complex then forms a dimer. Requires heme b as cofactor.

Its subcellular location is the mitochondrion inner membrane. In terms of biological role, component of the ubiquinol-cytochrome c reductase complex (complex III or cytochrome b-c1 complex) that is part of the mitochondrial respiratory chain. The b-c1 complex mediates electron transfer from ubiquinol to cytochrome c. Contributes to the generation of a proton gradient across the mitochondrial membrane that is then used for ATP synthesis. The sequence is that of Cytochrome b (MT-CYB) from Lepilemur randrianasoloi (Randrianasoli's sportive lemur).